A 657-amino-acid chain; its full sequence is Glycogen debranching enzyme (657 aa).

The active-site Nucleophile is Asp-336. Glu-371 functions as the Proton donor in the catalytic mechanism. Positions 460–479 (ANGEENRDGTNNNHSFNHGI) are disordered.

This sequence belongs to the glycosyl hydrolase 13 family.

It carries out the reaction Hydrolysis of (1-&gt;6)-alpha-D-glucosidic linkages to branches with degrees of polymerization of three or four glucose residues in limit dextrin.. The protein operates within glycan degradation; glycogen degradation. In terms of biological role, removes maltotriose and maltotetraose chains that are attached by 1,6-alpha-linkage to the limit dextrin main chain, generating a debranched limit dextrin. The chain is Glycogen debranching enzyme from Enterobacter sp. (strain 638).